Here is a 127-residue protein sequence, read N- to C-terminus: Tyrosine-protein phosphatase 2 (127 aa).

The region spanning 1–127 is the Tyrosine-protein phosphatase domain; that stretch reads QGSKVIVMVT…PRDCEAPILV (127 aa). The span at 63–81 shows a compositional bias: acidic residues; sequence VYDNDDGTEQNDEQTEEEP. The interval 63 to 82 is disordered; the sequence is VYDNDDGTEQNDEQTEEEPE.

Belongs to the protein-tyrosine phosphatase family.

It catalyses the reaction O-phospho-L-tyrosyl-[protein] + H2O = L-tyrosyl-[protein] + phosphate. In Styela plicata (Wrinkled sea squirt), this protein is Tyrosine-protein phosphatase 2 (STY-2).